Reading from the N-terminus, the 198-residue chain is Glycerol-3-phosphate acyltransferase (198 aa).

A run of 3 helical transmembrane segments spans residues 5-25 (AVIL…GYLI), 114-134 (VLIM…IAVL), and 154-176 (AFAL…LVAV).

Belongs to the PlsY family. In terms of assembly, probably interacts with PlsX.

The protein resides in the cell membrane. It carries out the reaction an acyl phosphate + sn-glycerol 3-phosphate = a 1-acyl-sn-glycero-3-phosphate + phosphate. Its pathway is lipid metabolism; phospholipid metabolism. Its function is as follows. Catalyzes the transfer of an acyl group from acyl-phosphate (acyl-PO(4)) to glycerol-3-phosphate (G3P) to form lysophosphatidic acid (LPA). This enzyme utilizes acyl-phosphate as fatty acyl donor, but not acyl-CoA or acyl-ACP. This is Glycerol-3-phosphate acyltransferase from Desulforudis audaxviator (strain MP104C).